The sequence spans 423 residues: Gamma-glutamyl phosphate reductase (423 aa).

It belongs to the gamma-glutamyl phosphate reductase family.

It localises to the cytoplasm. The enzyme catalyses L-glutamate 5-semialdehyde + phosphate + NADP(+) = L-glutamyl 5-phosphate + NADPH + H(+). The protein operates within amino-acid biosynthesis; L-proline biosynthesis; L-glutamate 5-semialdehyde from L-glutamate: step 2/2. In terms of biological role, catalyzes the NADPH-dependent reduction of L-glutamate 5-phosphate into L-glutamate 5-semialdehyde and phosphate. The product spontaneously undergoes cyclization to form 1-pyrroline-5-carboxylate. The sequence is that of Gamma-glutamyl phosphate reductase from Pseudomonas putida (strain ATCC 700007 / DSM 6899 / JCM 31910 / BCRC 17059 / LMG 24140 / F1).